A 663-amino-acid polypeptide reads, in one-letter code: Translation factor GUF1 homolog, mitochondrial (663 aa).

Residues 1–33 (MAGAAALRRSARRVVLPGAYALSRALQHPERLL) constitute a mitochondrion transit peptide. The region spanning 55–247 (ERVRNFSIIA…AVIERIPSPP (193 aa)) is the tr-type G domain. GTP contacts are provided by residues 64–71 (AHVDHGKS), 140–144 (DTPGH), and 194–197 (NKID).

Belongs to the TRAFAC class translation factor GTPase superfamily. Classic translation factor GTPase family. LepA subfamily.

It localises to the mitochondrion inner membrane. The enzyme catalyses GTP + H2O = GDP + phosphate + H(+). In terms of biological role, promotes mitochondrial protein synthesis. May act as a fidelity factor of the translation reaction, by catalyzing a one-codon backward translocation of tRNAs on improperly translocated ribosomes. Binds to mitochondrial ribosomes in a GTP-dependent manner. This Oryza sativa subsp. japonica (Rice) protein is Translation factor GUF1 homolog, mitochondrial.